Reading from the N-terminus, the 338-residue chain is UDP-3-O-acylglucosamine N-acyltransferase (338 aa).

The active-site Proton acceptor is histidine 251.

This sequence belongs to the transferase hexapeptide repeat family. LpxD subfamily. Homotrimer.

The catalysed reaction is a UDP-3-O-[(3R)-3-hydroxyacyl]-alpha-D-glucosamine + a (3R)-hydroxyacyl-[ACP] = a UDP-2-N,3-O-bis[(3R)-3-hydroxyacyl]-alpha-D-glucosamine + holo-[ACP] + H(+). Its pathway is bacterial outer membrane biogenesis; LPS lipid A biosynthesis. Its function is as follows. Catalyzes the N-acylation of UDP-3-O-acylglucosamine using 3-hydroxyacyl-ACP as the acyl donor. Is involved in the biosynthesis of lipid A, a phosphorylated glycolipid that anchors the lipopolysaccharide to the outer membrane of the cell. The sequence is that of UDP-3-O-acylglucosamine N-acyltransferase from Psychrobacter arcticus (strain DSM 17307 / VKM B-2377 / 273-4).